Here is a 201-residue protein sequence, read N- to C-terminus: Holliday junction resolvase RecU (201 aa).

Mg(2+) is bound by residues threonine 85, aspartate 87, aspartate 100, and glutamine 119.

Belongs to the RecU family. Mg(2+) is required as a cofactor.

The protein resides in the cytoplasm. It catalyses the reaction Endonucleolytic cleavage at a junction such as a reciprocal single-stranded crossover between two homologous DNA duplexes (Holliday junction).. In terms of biological role, endonuclease that resolves Holliday junction intermediates in genetic recombination. Cleaves mobile four-strand junctions by introducing symmetrical nicks in paired strands. Promotes annealing of linear ssDNA with homologous dsDNA. Required for DNA repair, homologous recombination and chromosome segregation. The chain is Holliday junction resolvase RecU from Pediococcus pentosaceus (strain ATCC 25745 / CCUG 21536 / LMG 10740 / 183-1w).